A 522-amino-acid polypeptide reads, in one-letter code: Alanine aminotransferase 2 (522 aa).

K340 bears the N6-(pyridoxal phosphate)lysine mark. K414, K504, and K511 each carry N6-acetyllysine.

It belongs to the class-I pyridoxal-phosphate-dependent aminotransferase family. Alanine aminotransferase subfamily. As to quaternary structure, homodimer. The cofactor is pyridoxal 5'-phosphate. In terms of tissue distribution, specifically induced in fatty liver. Highly expressed in muscle, liver and white adipose tissue. Moderately expressed in brain and kidney and expressed at low levels in the heart.

The catalysed reaction is L-alanine + 2-oxoglutarate = pyruvate + L-glutamate. It participates in amino-acid degradation; L-alanine degradation via transaminase pathway; pyruvate from L-alanine: step 1/1. In terms of biological role, catalyzes the reversible transamination between alanine and 2-oxoglutarate to form pyruvate and glutamate. The polypeptide is Alanine aminotransferase 2 (Gpt2) (Mus musculus (Mouse)).